The chain runs to 139 residues: Holo-[acyl-carrier-protein] synthase (139 aa).

Mg(2+)-binding residues include aspartate 8 and glutamate 57.

This sequence belongs to the P-Pant transferase superfamily. AcpS family. It depends on Mg(2+) as a cofactor.

The protein resides in the cytoplasm. It catalyses the reaction apo-[ACP] + CoA = holo-[ACP] + adenosine 3',5'-bisphosphate + H(+). Its function is as follows. Transfers the 4'-phosphopantetheine moiety from coenzyme A to a Ser of acyl-carrier-protein. The sequence is that of Holo-[acyl-carrier-protein] synthase from Dinoroseobacter shibae (strain DSM 16493 / NCIMB 14021 / DFL 12).